The following is a 147-amino-acid chain: Hemoglobin subunit epsilon-M (147 aa).

A Globin domain is found at 3–147 (HFTPEDKTNI…VSSALGHKYH (145 aa)). Phosphoserine is present on residues Ser-14 and Ser-51. Residues His-64 and His-93 each coordinate heme b.

It belongs to the globin family. Red blood cells.

In terms of biological role, hemoglobin epsilon chain is a beta-type chain found in early embryos. This is Hemoglobin subunit epsilon-M (HBE1) from Didelphis virginiana (North American opossum).